Reading from the N-terminus, the 1149-residue chain is Probable phospholipid-transporting ATPase IA (1149 aa).

The Cytoplasmic portion of the chain corresponds to 1–65 (MPTMRRTVSE…TAKYNIITFL (65 aa)). The residue at position 25 (S25) is a Phosphoserine. A Phosphothreonine modification is found at T28. Residue S29 is modified to Phosphoserine. Residues 66-86 (PRFLYSQFRRAANSFFLFIAL) traverse the membrane as a helical segment. Topologically, residues 87-92 (LQQIPD) are extracellular. A helical membrane pass occupies residues 93–115 (VSPTGRYTTLVPLLFILAVAAIK). Residues 116 to 297 (EIIEDIKRHK…SNVERITNVQ (182 aa)) lie on the Cytoplasmic side of the membrane. Residues 298–319 (ILILFCILIAMSLVCSVGSAIW) form a helical membrane-spanning segment. Residues 320 to 344 (NRRHSGRDWYLNLNYGGANNFGLNF) are Extracellular-facing. The helical transmembrane segment at 345–366 (LTFIILFNNLIPISLLVTLEVV) threads the bilayer. Over 367–842 (KFTQAYFINW…GAWNYNRGSK (476 aa)) the chain is Cytoplasmic. D409 functions as the 4-aspartylphosphate intermediate in the catalytic mechanism. Residues D409, K410, T411, E493, F534, K557, R590, T670, G671, D672, 726–733 (ALIIDGKT), R760, and K766 each bind ATP. D409 is a binding site for Mg(2+). T411 serves as a coordination point for Mg(2+). D786 is a Mg(2+) binding site. ATP-binding residues include N789 and D790. Mg(2+) is bound at residue D790. A helical membrane pass occupies residues 843–863 (CILYCFYKNIVLYIIEIWFAF). Residues 864–875 (VNGFSGQILFER) lie on the Extracellular side of the membrane. The helical transmembrane segment at 876 to 895 (WCIGLYNVMFTAMPPLTLGI) threads the bilayer. At 896 to 925 (FERSCRKEYMLKYPELYKTSQNALDFNTKV) the chain is on the cytoplasmic side. The helical transmembrane segment at 926–947 (FWVHCLNGLFHSVILFWFPLKA) threads the bilayer. The Extracellular segment spans residues 948 to 961 (LQYGTVFENGRTSD). Residues 962-984 (YLLLGNFVYTFVVITVCLKAGLE) traverse the membrane as a helical segment. The Cytoplasmic segment spans residues 985–990 (TSYWTW). The helical transmembrane segment at 991–1011 (FSHIAIWGSIALWVVFFGIYS) threads the bilayer. Residues 1012 to 1029 (SLWPAVPMAPDMSGEAAM) lie on the Extracellular side of the membrane. The helical transmembrane segment at 1030–1055 (LFSSGVFWMGLLFIPVASLLLDVVYK) threads the bilayer. The Cytoplasmic segment spans residues 1056-1149 (VIKRTAFKTL…DTTKQRPDEW (94 aa)). 1080–1087 (GAVVLGKS) is an ATP binding site. S1111 carries the post-translational modification Phosphoserine.

It belongs to the cation transport ATPase (P-type) (TC 3.A.3) family. Type IV subfamily. Component of a P4-ATPase flippase complex which consists of a catalytic alpha subunit and an accessory beta subunit. Interacts with TMEM30A to form a flippase complex; this complex forms an intermediate phosphoenzyme. Interacts with TMEM30B; this interaction is reported conflictingly. The cofactor is Mg(2+). Cleaved by calpain in a caspase- and calcium influx-dependent manner during platelet apoptosis leading to a 100 kDa polypeptide. As to expression, kidney.

Its subcellular location is the cytoplasmic vesicle. The protein resides in the secretory vesicle. It is found in the chromaffin granule membrane. The protein localises to the cytoplasmic granule. It localises to the cell membrane. Its subcellular location is the endoplasmic reticulum. The protein resides in the golgi apparatus. It carries out the reaction ATP + H2O + phospholipidSide 1 = ADP + phosphate + phospholipidSide 2.. The enzyme catalyses a 1,2-diacyl-sn-glycero-3-phospho-L-serine(out) + ATP + H2O = a 1,2-diacyl-sn-glycero-3-phospho-L-serine(in) + ADP + phosphate + H(+). Catalytic component of a P4-ATPase flippase complex which catalyzes the hydrolysis of ATP coupled to the transport of aminophospholipids from the outer to the inner leaflet of various membranes and ensures the maintenance of asymmetric distribution of phospholipids. Phospholipid translocation also seems to be implicated in vesicle formation and in uptake of lipid signaling molecules. In vitro, its ATPase activity is selectively and stereospecifically stimulated by phosphatidylserine (PS). The flippase complex ATP8A1:TMEM30A seems to play a role in regulation of cell migration probably involving flippase-mediated translocation of phosphatidylethanolamine (PE) at the cell membrane. Acts as aminophospholipid translocase at the cell membrane in neuronal cells. In Bos taurus (Bovine), this protein is Probable phospholipid-transporting ATPase IA.